An 84-amino-acid chain; its full sequence is RNA-binding protein Hfq (84 aa).

Residues 9 to 69 (DRFLNILRTN…VSTIMPESFV (61 aa)) enclose the Sm domain.

The protein belongs to the Hfq family. As to quaternary structure, homohexamer.

Functionally, RNA chaperone that binds small regulatory RNA (sRNAs) and mRNAs to facilitate mRNA translational regulation in response to envelope stress, environmental stress and changes in metabolite concentrations. Also binds with high specificity to tRNAs. This is RNA-binding protein Hfq from Thermosipho africanus (strain TCF52B).